A 605-amino-acid chain; its full sequence is Protein phosphatase 1D (605 aa).

Positions 1 to 101 are interaction with CHEK1; sequence MAGLYSLGVS…CRRRSSVAFF (101 aa). Residues 8–375 enclose the PPM-type phosphatase domain; it reads GVSVFSDQGG…DNTSAIVICI (368 aa). Positions 28 to 90 are disordered; that stretch reads VVEPEPTAEE…DAGASPAPSR (63 aa). Residues S40 and S85 each carry the phosphoserine modification. Residues D105, G106, D314, and D366 each contribute to the Mn(2+) site. Residues 516 to 591 are disordered; the sequence is STPGQMKAQE…RRLRGQKKIG (76 aa). Composition is skewed to polar residues over residues 530 to 544 and 555 to 577; these read PPTN…SNSG and LSRS…NSVK. Residues 579–588 show a composition bias toward basic residues; it reads TMRRRLRGQK.

The protein belongs to the PP2C family. In terms of assembly, interacts with CHEK1 and CHEK2; dephosphorylates them. Interacts with MAPK14. It depends on Mg(2+) as a cofactor. Mn(2+) is required as a cofactor. As to expression, expressed in fetal and adult brain. Also detected in fetal liver and skeletal muscle, but not in their adult counterparts.

The protein resides in the nucleus. Its subcellular location is the cytoplasm. The protein localises to the cytosol. It catalyses the reaction O-phospho-L-seryl-[protein] + H2O = L-seryl-[protein] + phosphate. The enzyme catalyses O-phospho-L-threonyl-[protein] + H2O = L-threonyl-[protein] + phosphate. Its function is as follows. Involved in the negative regulation of p53 expression. Required for the relief of p53-dependent checkpoint mediated cell cycle arrest. Binds to and dephosphorylates 'Ser-15' of TP53 and 'Ser-345' of CHEK1 which contributes to the functional inactivation of these proteins. Mediates MAPK14 dephosphorylation and inactivation. Is also an important regulator of global heterochromatin silencing and critical in maintaining genome integrity. The chain is Protein phosphatase 1D (PPM1D) from Homo sapiens (Human).